A 464-amino-acid polypeptide reads, in one-letter code: Chitobiosyldiphosphodolichol beta-mannosyltransferase (464 aa).

The Lumenal segment spans residues 1 to 2 (MA). Residues 3 to 23 (ASCLVLLALCLLLPLLLLGGW) form a helical membrane-spanning segment. The Cytoplasmic portion of the chain corresponds to 24–99 (KRWRRGRTAR…ELQSLAVGPR (76 aa)). The helical intramembrane region spans 100–120 (VFQYGVKVVFQAMYLLWKLMW). Topologically, residues 121 to 464 (REPGAYIFLQ…QTVLPLVMDT (344 aa)) are cytoplasmic. Phosphoserine is present on Ser242. A disordered region spans residues 242-261 (SPFRARSEPEDPATERSAFT).

Belongs to the glycosyltransferase group 1 family. Glycosyltransferase 33 subfamily.

It is found in the endoplasmic reticulum membrane. The catalysed reaction is an N,N'-diacetylchitobiosyl-diphospho-di-trans,poly-cis-dolichol + GDP-alpha-D-mannose = a beta-D-Man-(1-&gt;4)-beta-D-GlcNAc-(1-&gt;4)-alpha-D-GlcNAc-diphospho-di-trans,poly-cis-dolichol + GDP + H(+). The protein operates within protein modification; protein glycosylation. Mannosyltransferase that operates in the biosynthetic pathway of dolichol-linked oligosaccharides, the glycan precursors employed in protein asparagine (N)-glycosylation. The assembly of dolichol-linked oligosaccharides begins on the cytosolic side of the endoplasmic reticulum membrane and finishes in its lumen. The sequential addition of sugars to dolichol pyrophosphate produces dolichol-linked oligosaccharides containing fourteen sugars, including two GlcNAcs, nine mannoses and three glucoses. Once assembled, the oligosaccharide is transferred from the lipid to nascent proteins by oligosaccharyltransferases. Catalyzes, on the cytoplasmic face of the endoplasmic reticulum, the addition of the first mannose residues to the dolichol-linked oligosaccharide chain, to produce Man1GlcNAc(2)-PP-dolichol core oligosaccharide. Man1GlcNAc(2)-PP-dolichol is a substrate for ALG2, the following enzyme in the biosynthetic pathway. This chain is Chitobiosyldiphosphodolichol beta-mannosyltransferase, found in Pongo abelii (Sumatran orangutan).